We begin with the raw amino-acid sequence, 387 residues long: Succinate--CoA ligase [ADP-forming] subunit beta (387 aa).

Positions 9 to 245 constitute an ATP-grasp domain; it reads KDLLESYGLK…KSQENAKELK (237 aa). Residues lysine 46, 53–55, glutamate 100, tyrosine 103, and glutamate 108 each bind ATP; that span reads GRG. Residues asparagine 200 and aspartate 214 each coordinate Mg(2+). Residues asparagine 265 and 322-324 each bind substrate; that span reads GIV.

It belongs to the succinate/malate CoA ligase beta subunit family. In terms of assembly, heterotetramer of two alpha and two beta subunits. Mg(2+) serves as cofactor.

The catalysed reaction is succinate + ATP + CoA = succinyl-CoA + ADP + phosphate. It catalyses the reaction GTP + succinate + CoA = succinyl-CoA + GDP + phosphate. It functions in the pathway carbohydrate metabolism; tricarboxylic acid cycle; succinate from succinyl-CoA (ligase route): step 1/1. Succinyl-CoA synthetase functions in the citric acid cycle (TCA), coupling the hydrolysis of succinyl-CoA to the synthesis of either ATP or GTP and thus represents the only step of substrate-level phosphorylation in the TCA. The beta subunit provides nucleotide specificity of the enzyme and binds the substrate succinate, while the binding sites for coenzyme A and phosphate are found in the alpha subunit. The polypeptide is Succinate--CoA ligase [ADP-forming] subunit beta (Francisella tularensis subsp. holarctica (strain OSU18)).